Reading from the N-terminus, the 315-residue chain is CID domain-containing protein 1 (315 aa).

Positions 1 to 135 (MADFTEQTLR…RLHEVHQQVK (135 aa)) constitute a CID domain. Residues 227–273 (MLEEYVKRLKNETNERETLESNLNMLIENVRMSIEHHEKLCREVKRR) are a coiled coil.

The protein is CID domain-containing protein 1 (cids-1) of Caenorhabditis elegans.